We begin with the raw amino-acid sequence, 352 residues long: Diacylglycerol acyltransferase/mycolyltransferase Ag85C (352 aa).

The N-terminal stretch at 1-37 (MSFIEKVRKLRGAAATMPRRLAIAAVGASLLSGVAVA) is a signal peptide. 86–87 (LR) serves as a coordination point for substrate. A fibronectin-binding region spans residues 102-112 (FEEFYQSGLSV). 2 residues coordinate substrate: Ser170 and Asn198. Catalysis depends on Ser170, which acts as the Nucleophile. Residue Glu274 is part of the active site. Residues 276-279 (LTLR) and 306-308 (HSW) each bind substrate. His306 is a catalytic residue. The disordered stretch occupies residues 332–352 (TAAPAQPAQPAQPAQPAQPAT). The span at 333–352 (AAPAQPAQPAQPAQPAQPAT) shows a compositional bias: low complexity.

It belongs to the mycobacterial A85 antigen family. As to quaternary structure, homodimer.

The protein resides in the secreted. The catalysed reaction is an acyl-CoA + a 1,2-diacyl-sn-glycerol = a triacyl-sn-glycerol + CoA. It carries out the reaction 2 alpha,alpha'-trehalose 6-mycolate = alpha,alpha'-trehalose 6,6'-bismycolate + alpha,alpha-trehalose. Functionally, the antigen 85 proteins (FbpA, FbpB, FbpC) are responsible for the high affinity of mycobacteria to fibronectin, a large adhesive glycoprotein, which facilitates the attachment of M.tuberculosis to murine alveolar macrophages (AMs). They also help to maintain the integrity of the cell wall by catalyzing the transfer of mycolic acids to cell wall arabinogalactan and through the synthesis of alpha,alpha-trehalose dimycolate (TDM, cord factor). They catalyze the transfer of a mycoloyl residue from one molecule of alpha,alpha-trehalose monomycolate (TMM) to another TMM, leading to the formation of TDM. The sequence is that of Diacylglycerol acyltransferase/mycolyltransferase Ag85C (fbpC) from Mycobacterium avium.